The primary structure comprises 137 residues: uncharacterized protein (137 aa).

This sequence belongs to the ycf72 family.

The protein localises to the plastid. It localises to the chloroplast. This is an uncharacterized protein from Oryza nivara (Indian wild rice).